We begin with the raw amino-acid sequence, 445 residues long: tRNA-2-methylthio-N(6)-dimethylallyladenosine synthase (445 aa).

In terms of domain architecture, MTTase N-terminal spans 7–121 (KTFYIETFGC…LPEMLVQLEA (115 aa)). Residues Cys16, Cys52, Cys84, Cys158, Cys162, and Cys165 each coordinate [4Fe-4S] cluster. In terms of domain architecture, Radical SAM core spans 144–374 (RDNPHRAYLT…QEKQRAIQIR (231 aa)). The TRAM domain maps to 377 to 443 (AEMIGSIQEV…PNSLVGESAA (67 aa)).

Belongs to the methylthiotransferase family. MiaB subfamily. As to quaternary structure, monomer. [4Fe-4S] cluster is required as a cofactor.

It is found in the cytoplasm. The catalysed reaction is N(6)-dimethylallyladenosine(37) in tRNA + (sulfur carrier)-SH + AH2 + 2 S-adenosyl-L-methionine = 2-methylsulfanyl-N(6)-dimethylallyladenosine(37) in tRNA + (sulfur carrier)-H + 5'-deoxyadenosine + L-methionine + A + S-adenosyl-L-homocysteine + 2 H(+). Functionally, catalyzes the methylthiolation of N6-(dimethylallyl)adenosine (i(6)A), leading to the formation of 2-methylthio-N6-(dimethylallyl)adenosine (ms(2)i(6)A) at position 37 in tRNAs that read codons beginning with uridine. The polypeptide is tRNA-2-methylthio-N(6)-dimethylallyladenosine synthase (Solibacter usitatus (strain Ellin6076)).